Here is a 545-residue protein sequence, read N- to C-terminus: MTLLTQSSTWQALSAHTQNLPHMRELFATDAARFKNMSLSACGLFLDYSKNRATAETLELLFSLAKDSQLEAKIKAMFAGEIINTTEKRAVLHTALRSKASQSIIAEGQDIVLEVQQTLSKMQEFVETVTSGQWKGYTGKAITDIVSIGIGGSFLGPKVVSQALRPYWNQGLNCHFVANVDGTSISEKLKLLDSETTLFIMSSKSFGTQETLTNTLTAKAWFLAKGGLQSDVAKHFVAVTSNVTKATEFGIDANNIFPMWDWVGGRYSLWSAIGLPIALLVGMDNFRALLNGAHQMDEHFASAPLAENMPVIMGLLSLWYGNFFNAQSHVVLTYDHYLRGLPAYFQQLDMESNGKSVTLDGTDVDYSTGPVIWGGEGTNGQHAYHQLIHQGTALIPADFIMPLQSHNPIGVHHDQLASNCFGQTQALMQGRTFEEALAELANSSLTDEEKQLIAKHKVMPGNKPSNTLLMNKLTPETLGALIALYEHRTFVQGAIWDINSFDQWGVELGKNLGNDVLARISAEQDSSALDASSNGLINLYRQGAI.

Glu-351 acts as the Proton donor in catalysis. Active-site residues include His-382 and Lys-510.

This sequence belongs to the GPI family.

It localises to the cytoplasm. The catalysed reaction is alpha-D-glucose 6-phosphate = beta-D-fructose 6-phosphate. The protein operates within carbohydrate biosynthesis; gluconeogenesis. It participates in carbohydrate degradation; glycolysis; D-glyceraldehyde 3-phosphate and glycerone phosphate from D-glucose: step 2/4. In terms of biological role, catalyzes the reversible isomerization of glucose-6-phosphate to fructose-6-phosphate. In Shewanella putrefaciens (strain CN-32 / ATCC BAA-453), this protein is Glucose-6-phosphate isomerase.